A 34-amino-acid chain; its full sequence is Cytochrome c oxidase subunit 6B (34 aa).

It belongs to the cytochrome c oxidase subunit 6B family. As to quaternary structure, component of the cytochrome c oxidase (complex IV, CIV), a multisubunit enzyme composed of 14 subunits. The complex is composed of a catalytic core of 3 subunits MT-CO1, MT-CO2 and MT-CO3, encoded in the mitochondrial DNA, and 11 supernumerary subunits COX4I, COX5A, COX5B, COX6A, COX6B, COX6C, COX7A, COX7B, COX7C, COX8 and NDUFA4, which are encoded in the nuclear genome. The complex exists as a monomer or a dimer and forms supercomplexes (SCs) in the inner mitochondrial membrane with NADH-ubiquinone oxidoreductase (complex I, CI) and ubiquinol-cytochrome c oxidoreductase (cytochrome b-c1 complex, complex III, CIII), resulting in different assemblies (supercomplex SCI(1)III(2)IV(1) and megacomplex MCI(2)III(2)IV(2)). The N-terminus is blocked.

Its subcellular location is the mitochondrion inner membrane. It functions in the pathway energy metabolism; oxidative phosphorylation. Its function is as follows. Component of the cytochrome c oxidase, the last enzyme in the mitochondrial electron transport chain which drives oxidative phosphorylation. The respiratory chain contains 3 multisubunit complexes succinate dehydrogenase (complex II, CII), ubiquinol-cytochrome c oxidoreductase (cytochrome b-c1 complex, complex III, CIII) and cytochrome c oxidase (complex IV, CIV), that cooperate to transfer electrons derived from NADH and succinate to molecular oxygen, creating an electrochemical gradient over the inner membrane that drives transmembrane transport and the ATP synthase. Cytochrome c oxidase is the component of the respiratory chain that catalyzes the reduction of oxygen to water. Electrons originating from reduced cytochrome c in the intermembrane space (IMS) are transferred via the dinuclear copper A center (CU(A)) of subunit 2 and heme A of subunit 1 to the active site in subunit 1, a binuclear center (BNC) formed by heme A3 and copper B (CU(B)). The BNC reduces molecular oxygen to 2 water molecules using 4 electrons from cytochrome c in the IMS and 4 protons from the mitochondrial matrix. This is Cytochrome c oxidase subunit 6B from Thunnus obesus (Bigeye tuna).